Consider the following 336-residue polypeptide: Peroxidase 20 (336 aa).

The N-terminal stretch at Met-1 to Gly-24 is a signal peptide. 4 cysteine pairs are disulfide-bonded: Cys-39/Cys-119, Cys-72/Cys-77, Cys-125/Cys-331, and Cys-204/Cys-239. The active-site Proton acceptor is His-70. Residues Asp-71, Val-74, Gly-76, Asp-78, and Ser-80 each contribute to the Ca(2+) site. Residue Pro-167 coordinates substrate. N-linked (GlcNAc...) asparagine glycosylation occurs at Asn-170. Residue His-197 coordinates heme b. Position 198 (Thr-198) interacts with Ca(2+). Asp-252, Thr-255, and Asp-260 together coordinate Ca(2+).

It belongs to the peroxidase family. Classical plant (class III) peroxidase subfamily. Requires heme b as cofactor. It depends on Ca(2+) as a cofactor.

The protein localises to the secreted. It catalyses the reaction 2 a phenolic donor + H2O2 = 2 a phenolic radical donor + 2 H2O. Its function is as follows. Removal of H(2)O(2), oxidation of toxic reductants, biosynthesis and degradation of lignin, suberization, auxin catabolism, response to environmental stresses such as wounding, pathogen attack and oxidative stress. These functions might be dependent on each isozyme/isoform in each plant tissue. May be implicated in the systemic acquired resistance response via the salicylic acid signal transduction pathway. This Arabidopsis thaliana (Mouse-ear cress) protein is Peroxidase 20 (PER20).